Consider the following 859-residue polypeptide: Rod cGMP-specific 3',5'-cyclic phosphodiesterase subunit alpha (859 aa).

Residue glycine 2 is modified to N-acetylglycine. 2 GAF domains span residues 73–222 (QAEK…NLIM) and 254–431 (DIER…GWSV). The PDEase domain maps to 483-816 (EEEELAEILQ…KEWKALADEY (334 aa)). Histidine 559 (proton donor) is an active-site residue. Positions 563, 599, 600, and 720 each coordinate a divalent metal cation. Residues 823 to 859 (LEEEKQKQQAAKQAASGNQPGGNPLQGAPASKSCCIQ) form a disordered region. At cysteine 856 the chain carries Cysteine methyl ester. Cysteine 856 carries S-farnesyl cysteine lipidation. A propeptide spans 857–859 (CIQ) (removed in mature form).

It belongs to the cyclic nucleotide phosphodiesterase family. Oligomer composed of two catalytic chains (alpha and beta), an inhibitory chain (gamma) and the delta chain. A divalent metal cation serves as cofactor.

It localises to the cell membrane. It is found in the cell projection. Its subcellular location is the cilium. The protein localises to the photoreceptor outer segment. The enzyme catalyses 3',5'-cyclic GMP + H2O = GMP + H(+). Functionally, rod-specific cGMP phosphodiesterase that catalyzes the hydrolysis of 3',5'-cyclic GMP. This protein participates in processes of transmission and amplification of the visual signal. This Mus musculus (Mouse) protein is Rod cGMP-specific 3',5'-cyclic phosphodiesterase subunit alpha.